Here is a 102-residue protein sequence, read N- to C-terminus: Large ribosomal subunit protein uL24 (102 aa).

It belongs to the universal ribosomal protein uL24 family. In terms of assembly, part of the 50S ribosomal subunit.

Its function is as follows. One of two assembly initiator proteins, it binds directly to the 5'-end of the 23S rRNA, where it nucleates assembly of the 50S subunit. In terms of biological role, one of the proteins that surrounds the polypeptide exit tunnel on the outside of the subunit. The polypeptide is Large ribosomal subunit protein uL24 (Alkaliphilus oremlandii (strain OhILAs) (Clostridium oremlandii (strain OhILAs))).